We begin with the raw amino-acid sequence, 427 residues long: Enolase (427 aa).

Gln-163 serves as a coordination point for (2R)-2-phosphoglycerate. Catalysis depends on Glu-205, which acts as the Proton donor. 3 residues coordinate Mg(2+): Asp-242, Glu-285, and Asp-312. (2R)-2-phosphoglycerate contacts are provided by Lys-337, Arg-366, Ser-367, and Lys-388. Lys-337 functions as the Proton acceptor in the catalytic mechanism.

Belongs to the enolase family. It depends on Mg(2+) as a cofactor.

Its subcellular location is the cytoplasm. It is found in the secreted. It localises to the cell surface. The catalysed reaction is (2R)-2-phosphoglycerate = phosphoenolpyruvate + H2O. Its pathway is carbohydrate degradation; glycolysis; pyruvate from D-glyceraldehyde 3-phosphate: step 4/5. Functionally, catalyzes the reversible conversion of 2-phosphoglycerate (2-PG) into phosphoenolpyruvate (PEP). It is essential for the degradation of carbohydrates via glycolysis. In Rhodopseudomonas palustris (strain BisB5), this protein is Enolase.